A 285-amino-acid polypeptide reads, in one-letter code: Protein FD (285 aa).

A compositionally biased stretch (basic residues) spans 1-12 (MLSSAKHQRNHR). Disordered regions lie at residues 1 to 59 (MLSS…QKRS), 79 to 107 (NRHSPHPQHNHEPRFRGQNHHNQNPNSIF), 115 to 134 (LNQEPAPTSQTTGSAPNGDS), 198 to 236 (SSSFGKKRGQDSNEGSGNRRHKRMIKNRESAARSRARKQ), and 257 to 285 (KRQQDQLKMAAAIQQPKKNTLQRSSTAPF). Positions 13-25 (LSATNKNQTLTKV) are enriched in polar residues. The span at 26-50 (SSISSSSPSSSSSSSSTSSSSPLPS) shows a compositional bias: low complexity. A compositionally biased stretch (polar residues) spans 98 to 107 (HHNQNPNSIF). The bZIP domain occupies 214–277 (GNRRHKRMIK…AIQQPKKNTL (64 aa)). The interval 216 to 235 (RRHKRMIKNRESAARSRARK) is basic motif. Positions 242–263 (LELEVAHLQAENARLKRQQDQL) are leucine-zipper. Residues 272-285 (PKKNTLQRSSTAPF) show a composition bias toward polar residues. Thr282 carries the phosphothreonine modification.

The protein belongs to the bZIP family. As to quaternary structure, self-interacts. Interacts with FT and FDP/BZIP27. Interacts with GRF3 and GRF4, and in a calcium-independent manner, with CPK6 and CPK33. Post-translationally, phosphorylated at Thr-282 in a calcium-dependent manner by CPK6 and CPK33. As to expression, highly expressed in shoot apex.

The protein resides in the nucleus. Transcription factor required for the transition to flowering promoted by FT. In Arabidopsis thaliana (Mouse-ear cress), this protein is Protein FD.